Consider the following 310-residue polypeptide: Putative methyltransferase mtx subunit H (310 aa).

The protein belongs to the MtrH family. May be part of a complex composed of 3 subunits; MtxA, MtxH and MtxX.

The polypeptide is Putative methyltransferase mtx subunit H (mtxH) (Methanosarcina acetivorans (strain ATCC 35395 / DSM 2834 / JCM 12185 / C2A)).